Consider the following 37-residue polypeptide: Large ribosomal subunit protein bL36 (37 aa).

Belongs to the bacterial ribosomal protein bL36 family.

The protein is Large ribosomal subunit protein bL36 of Clostridium kluyveri (strain NBRC 12016).